The primary structure comprises 291 residues: Pantothenate synthetase (291 aa).

30–37 (MGNLHEGH) is a binding site for ATP. The active-site Proton donor is the His-37. Gln-61 is a binding site for (R)-pantoate. Gln-61 contacts beta-alanine. Residue 149 to 152 (GEKD) participates in ATP binding. (R)-pantoate is bound at residue Gln-155. ATP is bound by residues Val-178 and 186–189 (MSSR).

The protein belongs to the pantothenate synthetase family. In terms of assembly, homodimer.

Its subcellular location is the cytoplasm. The catalysed reaction is (R)-pantoate + beta-alanine + ATP = (R)-pantothenate + AMP + diphosphate + H(+). The protein operates within cofactor biosynthesis; (R)-pantothenate biosynthesis; (R)-pantothenate from (R)-pantoate and beta-alanine: step 1/1. Functionally, catalyzes the condensation of pantoate with beta-alanine in an ATP-dependent reaction via a pantoyl-adenylate intermediate. The protein is Pantothenate synthetase of Aliivibrio fischeri (strain ATCC 700601 / ES114) (Vibrio fischeri).